Consider the following 1245-residue polypeptide: ATP-dependent helicase/nuclease subunit A (1245 aa).

In terms of domain architecture, UvrD-like helicase ATP-binding spans 4–477; sequence TKWTDEQLSA…IQLYKNFRSR (474 aa). 25–32 is a binding site for ATP; sequence AAAGSGKT. The UvrD-like helicase C-terminal domain maps to 517-815; the sequence is KFKDTIVGGP…RIMSIHKSKG (299 aa).

Belongs to the helicase family. AddA subfamily. As to quaternary structure, heterodimer of AddA and AddB/RexB. Mg(2+) is required as a cofactor.

The catalysed reaction is Couples ATP hydrolysis with the unwinding of duplex DNA by translocating in the 3'-5' direction.. The enzyme catalyses ATP + H2O = ADP + phosphate + H(+). Its function is as follows. The heterodimer acts as both an ATP-dependent DNA helicase and an ATP-dependent, dual-direction single-stranded exonuclease. Recognizes the chi site generating a DNA molecule suitable for the initiation of homologous recombination. The AddA nuclease domain is required for chi fragment generation; this subunit has the helicase and 3' -&gt; 5' nuclease activities. The sequence is that of ATP-dependent helicase/nuclease subunit A from Clostridium beijerinckii (strain ATCC 51743 / NCIMB 8052) (Clostridium acetobutylicum).